The following is a 176-amino-acid chain: Protein GrpE (176 aa).

The protein belongs to the GrpE family. In terms of assembly, homodimer.

Its subcellular location is the cytoplasm. Functionally, participates actively in the response to hyperosmotic and heat shock by preventing the aggregation of stress-denatured proteins, in association with DnaK and GrpE. It is the nucleotide exchange factor for DnaK and may function as a thermosensor. Unfolded proteins bind initially to DnaJ; upon interaction with the DnaJ-bound protein, DnaK hydrolyzes its bound ATP, resulting in the formation of a stable complex. GrpE releases ADP from DnaK; ATP binding to DnaK triggers the release of the substrate protein, thus completing the reaction cycle. Several rounds of ATP-dependent interactions between DnaJ, DnaK and GrpE are required for fully efficient folding. The chain is Protein GrpE from Meiothermus ruber.